Here is a 137-residue protein sequence, read N- to C-terminus: Large ribosomal subunit protein uL16 (137 aa).

The protein belongs to the universal ribosomal protein uL16 family. In terms of assembly, part of the 50S ribosomal subunit.

In terms of biological role, binds 23S rRNA and is also seen to make contacts with the A and possibly P site tRNAs. The protein is Large ribosomal subunit protein uL16 of Leuconostoc citreum (strain KM20).